Consider the following 444-residue polypeptide: Alanyl-tRNA editing protein Aarsd1 (444 aa).

Zn(2+)-binding residues include His109 and His113. Phosphoserine is present on Ser174. Residues Cys209 and His213 each contribute to the Zn(2+) site.

The protein belongs to the class-II aminoacyl-tRNA synthetase family. Alax-L subfamily. Zn(2+) is required as a cofactor.

It localises to the cytoplasm. Functionally, functions in trans to edit the amino acid moiety from incorrectly charged tRNA(Ala). In Bos taurus (Bovine), this protein is Alanyl-tRNA editing protein Aarsd1 (AARSD1).